Here is a 543-residue protein sequence, read N- to C-terminus: MAAKHVIYGEEARAKLKAGVDKLANAVKVTLGPKGREVIIEKKWGVPVVTKDGVTVAKEIELKDQFENIGAQLVKEVASKTADVAGDGTTTATVLAQAIFTEGLKAIASGANPMDLKRGIDEAVALVIEEVKKASIPVTSNKEIEQVATISANNDPVIGKLLAEAMEKVGKDGVITVEESKSSETTLETVQGMQFDRGYLSPYFITDADKMQAVLENPYILIFEKKISNIKELLPVLENVVRVGRSLVIIAEDVEAEALATLVVNTLKGVIRAVAVKAPGFGQRRKDYLEDIAILTGGQAITEDLGIKLESVTLDMLGQAEKVIVDKENTTIVGGKGDKKKVEARIEQIKKQIKETTSDYDREKLQERLAKLSGGVAIIRVGAATESELKEKKARVEDAVHATKAAAEEGIVAGGGTALAKASRVLENYTSANKDRELGVKIVYNACKYPLKQIAYNAGYEGSLVLEKVYEDQDKNYGFDAANGEYKDMVKAGIIDPTKVVRTALQNAASAAGTMLTAEALIAELPEKKEKTPTPTDMPPDFD.

ATP contacts are provided by residues 30–33 (TLGP), Lys-51, 87–91 (DGTTT), Gly-415, 480–482 (DAA), and Asp-496.

This sequence belongs to the chaperonin (HSP60) family. Forms a cylinder of 14 subunits composed of two heptameric rings stacked back-to-back. Interacts with the co-chaperonin GroES.

It is found in the cytoplasm. The catalysed reaction is ATP + H2O + a folded polypeptide = ADP + phosphate + an unfolded polypeptide.. Functionally, together with its co-chaperonin GroES, plays an essential role in assisting protein folding. The GroEL-GroES system forms a nano-cage that allows encapsulation of the non-native substrate proteins and provides a physical environment optimized to promote and accelerate protein folding. This Hydrogenobaculum sp. (strain Y04AAS1) protein is Chaperonin GroEL.